Consider the following 140-residue polypeptide: Nucleoside diphosphate kinase (140 aa).

Positions 11, 59, 87, 93, 104, and 114 each coordinate ATP. Residue His-117 is the Pros-phosphohistidine intermediate of the active site.

It belongs to the NDK family. Homotetramer. Requires Mg(2+) as cofactor.

Its subcellular location is the cytoplasm. It catalyses the reaction a 2'-deoxyribonucleoside 5'-diphosphate + ATP = a 2'-deoxyribonucleoside 5'-triphosphate + ADP. It carries out the reaction a ribonucleoside 5'-diphosphate + ATP = a ribonucleoside 5'-triphosphate + ADP. Functionally, major role in the synthesis of nucleoside triphosphates other than ATP. The ATP gamma phosphate is transferred to the NDP beta phosphate via a ping-pong mechanism, using a phosphorylated active-site intermediate. This chain is Nucleoside diphosphate kinase, found in Mesorhizobium japonicum (strain LMG 29417 / CECT 9101 / MAFF 303099) (Mesorhizobium loti (strain MAFF 303099)).